An 892-amino-acid chain; its full sequence is Phenylalanine--tRNA ligase beta subunit (892 aa).

The 112-residue stretch at 39-150 (NPGVEGVVVG…PGLEPGMDVA (112 aa)) folds into the tRNA-binding domain. Residues 406–569 (AVPPVILLRT…RCEGYDAIPL (164 aa)) enclose the B5 domain. The segment at 442–518 (VLTPADLAAD…ALLGGGESDG (77 aa)) is insert. Residues Asp547, Asp553, Glu556, and Glu557 each contribute to the Mg(2+) site. In terms of domain architecture, FDX-ACB spans 799–891 (PRFPAVTRDV…ALKALGAELR (93 aa)).

This sequence belongs to the phenylalanyl-tRNA synthetase beta subunit family. Type 1 subfamily. As to quaternary structure, tetramer of two alpha and two beta subunits. Requires Mg(2+) as cofactor.

The protein localises to the cytoplasm. It carries out the reaction tRNA(Phe) + L-phenylalanine + ATP = L-phenylalanyl-tRNA(Phe) + AMP + diphosphate + H(+). The polypeptide is Phenylalanine--tRNA ligase beta subunit (Symbiobacterium thermophilum (strain DSM 24528 / JCM 14929 / IAM 14863 / T)).